A 326-amino-acid polypeptide reads, in one-letter code: Fructose-1,6-bisphosphatase class 1 (326 aa).

Belongs to the FBPase class 1 family. As to quaternary structure, homotetramer.

Its subcellular location is the cytoplasm. The catalysed reaction is beta-D-fructose 1,6-bisphosphate + H2O = beta-D-fructose 6-phosphate + phosphate. The protein operates within carbohydrate biosynthesis; gluconeogenesis. The protein is Fructose-1,6-bisphosphatase class 1 of Methylobacterium sp. (strain 4-46).